Here is a 409-residue protein sequence, read N- to C-terminus: tRNA(Met) cytidine acetate ligase (409 aa).

ATP contacts are provided by residues 7-20 (VVEY…HLHH), Gly102, Asn169, and Arg194.

The protein belongs to the TmcAL family.

Its subcellular location is the cytoplasm. The catalysed reaction is cytidine(34) in elongator tRNA(Met) + acetate + ATP = N(4)-acetylcytidine(34) in elongator tRNA(Met) + AMP + diphosphate. Catalyzes the formation of N(4)-acetylcytidine (ac(4)C) at the wobble position of elongator tRNA(Met), using acetate and ATP as substrates. First activates an acetate ion to form acetyladenylate (Ac-AMP) and then transfers the acetyl group to tRNA to form ac(4)C34. This chain is tRNA(Met) cytidine acetate ligase, found in Clostridium botulinum (strain Loch Maree / Type A3).